Reading from the N-terminus, the 254-residue chain is Distal membrane-arm assembly complex protein 2 (254 aa).

S250 carries the phosphoserine modification.

This sequence belongs to the ATP synthase subunit s family. In terms of assembly, interacts with incompletely assembled mitochondrial NADH:ubiquinone oxidoreductase complex (complex I).

It localises to the mitochondrion. Required for the assembly of the mitochondrial NADH:ubiquinone oxidoreductase complex (complex I). Involved in the assembly of the distal region of complex I. The chain is Distal membrane-arm assembly complex protein 2 from Rattus norvegicus (Rat).